A 259-amino-acid chain; its full sequence is MALFSVPPPVTVILLDIEGTTTPITFVKDVLFPYVKENIKKYLLEHWQEKECQEDVTQLQKQAEKDSHLDGFVPIPSGVSDNTTEHMIQAVVDNVYWQMSFDRKTTALKQLQGHMWRSAYISGQLKGEVYEDVVPSIRQWRELGIKLYIYSSGSIDAQKLLFGYSIEGDLLKLLDGHFDTNIGHKVESKSYRNIADNIGCLPENILFLTDVVKEALAAEKAGLHVAVVVRPGNAALTDEDKSNCCCITSFHQIHFPSQK.

Residues aspartate 16 and glutamate 18 each contribute to the Mg(2+) site. Substrate-binding positions include 151 to 152 (SS) and lysine 185. Aspartate 210 serves as a coordination point for Mg(2+).

This sequence belongs to the HAD-like hydrolase superfamily. MasA/MtnC family. In terms of assembly, monomer. The cofactor is Mg(2+).

The protein resides in the cytoplasm. It localises to the nucleus. The enzyme catalyses 5-methylsulfanyl-2,3-dioxopentyl phosphate + H2O = 1,2-dihydroxy-5-(methylsulfanyl)pent-1-en-3-one + phosphate. The protein operates within amino-acid biosynthesis; L-methionine biosynthesis via salvage pathway; L-methionine from S-methyl-5-thio-alpha-D-ribose 1-phosphate: step 3/6. It participates in amino-acid biosynthesis; L-methionine biosynthesis via salvage pathway; L-methionine from S-methyl-5-thio-alpha-D-ribose 1-phosphate: step 4/6. Bifunctional enzyme that catalyzes the enolization of 2,3-diketo-5-methylthiopentyl-1-phosphate (DK-MTP-1-P) into the intermediate 2-hydroxy-3-keto-5-methylthiopentenyl-1-phosphate (HK-MTPenyl-1-P), which is then dephosphorylated to form the acireductone 1,2-dihydroxy-3-keto-5-methylthiopentene (DHK-MTPene). This chain is Enolase-phosphatase E1 (enoph1), found in Xenopus tropicalis (Western clawed frog).